A 371-amino-acid polypeptide reads, in one-letter code: 4-hydroxyphenylpyruvate dioxygenase-like protein (371 aa).

2 consecutive VOC domains span residues 7 to 135 and 160 to 328; these read RLCH…LLER and RVDH…VFTK. His-163, His-258, and Glu-339 together coordinate Fe cation.

This sequence belongs to the 4HPPD family. It depends on Fe cation as a cofactor.

The protein resides in the mitochondrion. It carries out the reaction 3-(4-hydroxyphenyl)pyruvate + O2 = (S)-4-hydroxymandelate + CO2. Iron-dependent dioxygenase that catalyzes the conversion of 4-hydroxyphenylpyruvate (4-HPPA) to 4-hydroxymandelate (4-HMA) in the mitochondria, one of the steps in the biosynthesis of coenzyme Q10 from tyrosine. This is 4-hydroxyphenylpyruvate dioxygenase-like protein from Homo sapiens (Human).